Here is a 156-residue protein sequence, read N- to C-terminus: Small ribosomal subunit protein uS7 (156 aa).

The protein belongs to the universal ribosomal protein uS7 family. As to quaternary structure, part of the 30S ribosomal subunit. Contacts proteins S9 and S11.

One of the primary rRNA binding proteins, it binds directly to 16S rRNA where it nucleates assembly of the head domain of the 30S subunit. Is located at the subunit interface close to the decoding center, probably blocks exit of the E-site tRNA. This is Small ribosomal subunit protein uS7 from Staphylococcus aureus (strain USA300).